The primary structure comprises 196 residues: Charged multivesicular body protein 1a (196 aa).

A coiled-coil region spans residues 5–41 (LFQLKFTAKQLEKLAKKAEKDSNTEQAKVKKALQQKN). A compositionally biased stretch (polar residues) spans 170–181 (QGASSVGESSTR). The interval 170 to 196 (QGASSVGESSTRTQEDQLSRRLASLRN) is disordered. Positions 185 to 195 (DQLSRRLASLR) match the MIT-interacting motif motif.

It belongs to the SNF7 family. Probable peripherally associated component of the endosomal sorting required for transport complex III (ESCRT-III).

It is found in the cytoplasm. Its subcellular location is the endosome membrane. Its function is as follows. Probable peripherally associated component of the endosomal sorting required for transport complex III (ESCRT-III) which is involved in multivesicular bodies (MVBs) formation and sorting of endosomal cargo proteins into MVBs. MVBs contain intraluminal vesicles (ILVs) that are generated by invagination and scission from the limiting membrane of the endosome and mostly are delivered to lysosomes enabling degradation of membrane proteins, such as stimulated growth factor receptors, lysosomal enzymes and lipids. The protein is Charged multivesicular body protein 1a (chmp1a) of Xenopus laevis (African clawed frog).